The sequence spans 145 residues: MAPKAAAGKKPAEKKPVEEKKAEEVPAEKKPKAGKKLPKDAGRPDKKKKRAKKSIETYKIYIFKVLKQVHPDIGISSKSMGIMNSFINDIFEKLAQESSRLARYNKKPTITSREIQTAVRLVLPGELAKHAVSEGTKAVTKFTSS.

The tract at residues 1-52 (MAPKAAAGKKPAEKKPVEEKKAEEVPAEKKPKAGKKLPKDAGRPDKKKKRAK) is disordered. Residues K9, K35, and K36 each carry the N6-acetyllysine modification. Over residues 10–44 (KPAEKKPVEEKKAEEVPAEKKPKAGKKLPKDAGRP) the composition is skewed to basic and acidic residues. K141 is covalently cross-linked (Glycyl lysine isopeptide (Lys-Gly) (interchain with G-Cter in ubiquitin)).

This sequence belongs to the histone H2B family. In terms of assembly, the nucleosome is a histone octamer containing two molecules each of H2A, H2B, H3 and H4 assembled in one H3-H4 heterotetramer and two H2A-H2B heterodimers. The octamer wraps approximately 147 bp of DNA. Can be acetylated to form H2BK6ac, H2BK33ac and H2BK34ac. In terms of processing, monoubiquitinated to form H2BK143ub1; may give a specific tag for epigenetic transcriptional activation. In terms of tissue distribution, in anthers, floral buds, pollen, petals and fruits.

The protein resides in the nucleus. The protein localises to the chromosome. Core component of nucleosome. Nucleosomes wrap and compact DNA into chromatin, limiting DNA accessibility to the cellular machineries which require DNA as a template. Histones thereby play a central role in transcription regulation, DNA repair, DNA replication and chromosomal stability. DNA accessibility is regulated via a complex set of post-translational modifications of histones, also called histone code, and nucleosome remodeling. The sequence is that of Histone H2B (HIS2B) from Capsicum annuum (Capsicum pepper).